The primary structure comprises 1010 residues: Probable LRR receptor-like serine/threonine-protein kinase At3g47570 (1010 aa).

An N-terminal signal peptide occupies residues 1 to 19 (MRLFLLLAFNALMLLETHG). Over 20-645 (FTDETDRQAL…SSRLKKVVIG (626 aa)) the chain is Extracellular. N-linked (GlcNAc...) asparagine glycosylation is found at asparagine 48 and asparagine 88. LRR repeat units follow at residues 89-113 (LSFL…VGQL), 114-137 (SRLE…LYNC), 139-161 (RLLN…LGSL), 162-185 (TNLV…LGNL), 186-209 (TLLE…VAQL), 211-233 (QIWS…LYNL), 234-258 (SSLK…GILL), 259-282 (PNLL…LSNI), 283-307 (STLE…NVPN), and 310-333 (LLFL…TSLT). N-linked (GlcNAc...) asparagine glycosylation occurs at asparagine 136. A glycan (N-linked (GlcNAc...) asparagine) is linked at asparagine 184. N-linked (GlcNAc...) asparagine glycans are attached at residues asparagine 221 and asparagine 232. N-linked (GlcNAc...) asparagine glycosylation is found at asparagine 281 and asparagine 294. Residues asparagine 334 and asparagine 358 are each glycosylated (N-linked (GlcNAc...) asparagine). 11 LRR repeats span residues 335 to 359 (CTQL…IANL), 361 to 384 (AKLV…IGNL), 385 to 408 (INLQ…LGKL), 410 to 432 (NLRY…IGNM), 433 to 455 (TMLE…SLGN), 457 to 480 (SHLL…IMKI), 481 to 504 (QQLL…IGAL), 505 to 528 (QNLG…LGNC), 530 to 551 (TMES…LKGL), 552 to 574 (VGVK…YFAS), and 575 to 600 (FSKL…IFEN). 3 N-linked (GlcNAc...) asparagine glycosylation sites follow: asparagine 431, asparagine 455, and asparagine 470. N-linked (GlcNAc...) asparagine glycans are attached at residues asparagine 582 and asparagine 600. A helical membrane pass occupies residues 646–666 (VSVGITLLLLLFMASVTLIWL). At 667–1010 (RKRKKNKETN…FFKASRTTWR (344 aa)) the chain is on the cytoplasmic side. The residue at position 699 (threonine 699) is a Phosphothreonine. The 301-residue stretch at 702 to 1002 (FSSSNMVGSG…ELISIRERFF (301 aa)) folds into the Protein kinase domain. Residues 708-716 (VGSGSFGTV) and lysine 731 contribute to the ATP site. 2 positions are modified to phosphotyrosine: tyrosine 781 and tyrosine 826. Catalysis depends on aspartate 839, which acts as the Proton acceptor. Position 887 is a phosphotyrosine (tyrosine 887).

The protein belongs to the protein kinase superfamily. Ser/Thr protein kinase family.

It is found in the cell membrane. The enzyme catalyses L-seryl-[protein] + ATP = O-phospho-L-seryl-[protein] + ADP + H(+). It catalyses the reaction L-threonyl-[protein] + ATP = O-phospho-L-threonyl-[protein] + ADP + H(+). This Arabidopsis thaliana (Mouse-ear cress) protein is Probable LRR receptor-like serine/threonine-protein kinase At3g47570.